We begin with the raw amino-acid sequence, 161 residues long: uncharacterized protein (161 aa).

This is an uncharacterized protein from Caenorhabditis elegans.